The primary structure comprises 265 residues: H-2 class II histocompatibility antigen, A-D beta chain (265 aa).

Residues 1-27 (MALQIPSLLLSAAVVVLMVLSSPRTEG) form the signal peptide. Residues 28–122 (GNSERHFVVQ…PETSTSLRRL (95 aa)) are beta-1. Residues 28–226 (GNSERHFVVQ…RAQSESARSK (199 aa)) are Extracellular-facing. 2 cysteine pairs are disulfide-bonded: Cys-42–Cys-106 and Cys-145–Cys-201. Asn-46 is a glycosylation site (N-linked (GlcNAc...) asparagine). A beta-2 region spans residues 123–216 (EQPNVAISLS…SLKSPITVEW (94 aa)). Residues 125–213 (PNVAISLSRT…EHPSLKSPIT (89 aa)) form the Ig-like C1-type domain. The tract at residues 217–226 (RAQSESARSK) is connecting peptide. A helical transmembrane segment spans residues 227 to 247 (MLSGIGGCVLGVIFLGLGLFI). At 248-265 (RHRSQKGPRGPPPAGLLQ) the chain is on the cytoplasmic side.

Belongs to the MHC class II family. Post-translationally, ubiquitinated in immature dendritic cells leading to down-regulation of MHC class II.

The protein resides in the membrane. This is H-2 class II histocompatibility antigen, A-D beta chain (H2-Ab1) from Mus musculus (Mouse).